The primary structure comprises 828 residues: Translation initiation factor IF-2 (828 aa).

2 disordered regions span residues 48–76 (SYSG…SEEF) and 112–148 (ASQE…ESTL). Residues 49-58 (YSGSTTTLSL) are compositionally biased toward polar residues. A compositionally biased stretch (low complexity) spans 65–74 (LETGSSSGSE). Acidic residues predominate over residues 116–126 (DPIEVEQEESS). The span at 127-144 (DTNKVKEEPKIEEVKDIE) shows a compositional bias: basic and acidic residues. One can recognise a tr-type G domain in the interval 326–496 (SRAPVVTVMG…LLIAEMQNLK (171 aa)). The segment at 335–342 (GHVDHGKT) is G1. GTP is bound at residue 335 to 342 (GHVDHGKT). The G2 stretch occupies residues 360–364 (GITQH). Positions 382–385 (DTPG) are G3. GTP is bound by residues 382–386 (DTPGH) and 436–439 (NKID). Positions 436 to 439 (NKID) are G4. A G5 region spans residues 472 to 474 (SAL).

Belongs to the TRAFAC class translation factor GTPase superfamily. Classic translation factor GTPase family. IF-2 subfamily.

Its subcellular location is the cytoplasm. Functionally, one of the essential components for the initiation of protein synthesis. Protects formylmethionyl-tRNA from spontaneous hydrolysis and promotes its binding to the 30S ribosomal subunits. Also involved in the hydrolysis of GTP during the formation of the 70S ribosomal complex. The polypeptide is Translation initiation factor IF-2 (Rickettsia bellii (strain OSU 85-389)).